We begin with the raw amino-acid sequence, 1673 residues long: Leucine-rich repeat- and IQ domain-containing protein 1 (1673 aa).

Disordered regions lie at residues 22–48 and 189–208; these read ISIS…SDTD and LEEK…KRTF. The stretch at 34–59 is one LRR 1 repeat; that stretch reads NDSVSDTQSDSSDTDLLELPESVLHY. The LRR 2 repeat unit spans residues 216-239; sequence QCWMRQFEVEKKHLEDLQKQDQDK. One can recognise an IQ 1 domain in the interval 291 to 320; the sequence is RYDAAVKIQATYRASVTYRKYSPIIKEQME. The interval 324 to 374 is disordered; that stretch reads RRAQELKEKEAKIRQKEEEKRRRLEEEQRVEEEKKKKMLEERRRREREYEE. Positions 326–374 are enriched in basic and acidic residues; it reads AQELKEKEAKIRQKEEEKRRRLEEEQRVEEEKKKKMLEERRRREREYEE. The LRR 3 repeat unit spans residues 491 to 516; sequence LPKLKINENLSKNQCSEQPSDQEFNA. 2 disordered regions span residues 544–658 and 679–702; these read ESDT…EEIP and EGEA…GSHS. Basic and acidic residues-rich tracts occupy residues 549–567 and 588–602; these read TEEH…ETEK and EETR…EIKE. Over residues 603-629 the composition is skewed to polar residues; sequence MTQQGGPSDENNSSPISMQKSLPSLTP. The stretch at 641-665 is one LRR 4 repeat; sequence LEEDQETDLKSERIEEIPEEGVLSC. The segment covering 647–656 has biased composition (basic and acidic residues); the sequence is TDLKSERIEE. 11 LRR repeats span residues 830 to 852, 853 to 873, 874 to 894, 895 to 919, 921 to 939, 940 to 961, 962 to 983, 984 to 1005, 1007 to 1029, 1030 to 1054, and 1067 to 1090; these read CSNL…LSHC, TRLK…CENL, ENLS…GFDG, CTNL…SLKY, QELT…LCEA, PTIV…IGNC, GLLQ…LRNH, VLLR…LSSC, LPLL…LFHL, VSLE…WFNA, and PVLQ…VLNG. Disordered stretches follow at residues 1163 to 1230 and 1308 to 1330; these read AHEQ…HCEE and PTTT…EERR. Composition is skewed to polar residues over residues 1168–1226 and 1308–1325; these read DVNT…PSTS and PTTT…QTTS. 2 IQ domains span residues 1280–1309 and 1340–1369; these read PTKA…MHPT and REKA…AIKD. The stretch at 1378–1405 is one LRR 16 repeat; the sequence is EIDLEDFEFDEDALEKDWPALDSTGFPS.

This Mus musculus (Mouse) protein is Leucine-rich repeat- and IQ domain-containing protein 1 (Lrriq1).